The following is a 160-amino-acid chain: Crossover junction endodeoxyribonuclease RuvC (160 aa).

Residues D7, E70, and D142 contribute to the active site. Residues D7, E70, and D142 each coordinate Mg(2+).

This sequence belongs to the RuvC family. In terms of assembly, homodimer which binds Holliday junction (HJ) DNA. The HJ becomes 2-fold symmetrical on binding to RuvC with unstacked arms; it has a different conformation from HJ DNA in complex with RuvA. In the full resolvosome a probable DNA-RuvA(4)-RuvB(12)-RuvC(2) complex forms which resolves the HJ. The cofactor is Mg(2+).

The protein localises to the cytoplasm. It carries out the reaction Endonucleolytic cleavage at a junction such as a reciprocal single-stranded crossover between two homologous DNA duplexes (Holliday junction).. Functionally, the RuvA-RuvB-RuvC complex processes Holliday junction (HJ) DNA during genetic recombination and DNA repair. Endonuclease that resolves HJ intermediates. Cleaves cruciform DNA by making single-stranded nicks across the HJ at symmetrical positions within the homologous arms, yielding a 5'-phosphate and a 3'-hydroxyl group; requires a central core of homology in the junction. The consensus cleavage sequence is 5'-(A/T)TT(C/G)-3'. Cleavage occurs on the 3'-side of the TT dinucleotide at the point of strand exchange. HJ branch migration catalyzed by RuvA-RuvB allows RuvC to scan DNA until it finds its consensus sequence, where it cleaves and resolves the cruciform DNA. This Ehrlichia ruminantium (strain Gardel) protein is Crossover junction endodeoxyribonuclease RuvC.